A 414-amino-acid chain; its full sequence is Phosphopentomutase (414 aa).

6 residues coordinate Mn(2+): Asp10, Asp309, His314, Asp350, His351, and His362.

Belongs to the phosphopentomutase family. Requires Mn(2+) as cofactor.

Its subcellular location is the cytoplasm. The enzyme catalyses 2-deoxy-alpha-D-ribose 1-phosphate = 2-deoxy-D-ribose 5-phosphate. The catalysed reaction is alpha-D-ribose 1-phosphate = D-ribose 5-phosphate. The protein operates within carbohydrate degradation; 2-deoxy-D-ribose 1-phosphate degradation; D-glyceraldehyde 3-phosphate and acetaldehyde from 2-deoxy-alpha-D-ribose 1-phosphate: step 1/2. Its function is as follows. Isomerase that catalyzes the conversion of deoxy-ribose 1-phosphate (dRib-1-P) and ribose 1-phosphate (Rib-1-P) to deoxy-ribose 5-phosphate (dRib-5-P) and ribose 5-phosphate (Rib-5-P), respectively. In Hahella chejuensis (strain KCTC 2396), this protein is Phosphopentomutase.